A 95-amino-acid polypeptide reads, in one-letter code: Small ribosomal subunit protein bS6 (95 aa).

Belongs to the bacterial ribosomal protein bS6 family.

Its function is as follows. Binds together with bS18 to 16S ribosomal RNA. This chain is Small ribosomal subunit protein bS6, found in Desulforamulus reducens (strain ATCC BAA-1160 / DSM 100696 / MI-1) (Desulfotomaculum reducens).